The primary structure comprises 527 residues: Peptide chain release factor 3 (527 aa).

Positions 10-278 (DKRRTFAIIS…AFIEYAPAPL (269 aa)) constitute a tr-type G domain. GTP contacts are provided by residues 19-26 (SHPDAGKT), 87-91 (DTPGH), and 141-144 (NKLD).

The protein belongs to the TRAFAC class translation factor GTPase superfamily. Classic translation factor GTPase family. PrfC subfamily.

It localises to the cytoplasm. Functionally, increases the formation of ribosomal termination complexes and stimulates activities of RF-1 and RF-2. It binds guanine nucleotides and has strong preference for UGA stop codons. It may interact directly with the ribosome. The stimulation of RF-1 and RF-2 is significantly reduced by GTP and GDP, but not by GMP. The sequence is that of Peptide chain release factor 3 from Pelobacter propionicus (strain DSM 2379 / NBRC 103807 / OttBd1).